Consider the following 252-residue polypeptide: ELH type 2 (252 aa).

A signal peptide spans 1–19; the sequence is AISLLMCLILSALCASSES. Propeptides lie at residues 20-75, 92-130, and 144-185; these read AVVH…VNNE, PQEVSGLKPVMMSRASASADENSLFDLYNTDGAMYQREL, and AAGD…SGIA. The segment covering 145–161 has biased composition (basic and acidic residues); that stretch reads AGDEDKAEEHNPETESH. The interval 145–171 is disordered; sequence AGDEDKAEEHNPETESHSRRKRSALTP. At K222 the chain carries Lysine amide.

Belongs to the molluscan ELH family. In terms of tissue distribution, bag cell neurons.

Its subcellular location is the secreted. Its function is as follows. ELH acts as a neurotransmitter locally, upon neurons of the abdominal ganglion and as a hormone by diffusing into the circulating hemolymph and modulating the activity of other organs. It specifically causes contraction of smooth muscle in the ovotestis and expulsion of the egg string. In terms of biological role, alpha-BCP decreases the activity of a cluster of neurons in the left upper quadrant of the abdominal ganglion. Beta-BCP specifically excites 2 neurons, L1 and R1, in the abdominal ganglion. The protein is ELH type 2 (ELH2) of Aplysia parvula (Dwarf sea hare).